The chain runs to 446 residues: NAD kinase (446 aa).

S46, S48, S50, S55, and S64 each carry phosphoserine.

It belongs to the NAD kinase family. Requires a divalent metal cation as cofactor. Widely expressed but not detected in skeletal muscle.

The enzyme catalyses NAD(+) + ATP = ADP + NADP(+) + H(+). The protein is NAD kinase (NADK) of Homo sapiens (Human).